Here is a 517-residue protein sequence, read N- to C-terminus: Tyrosine-protein kinase Src42A (517 aa).

Positions Met1 to Glu47 are disordered. Basic and acidic residues predominate over residues Gly10 to Asp23. Residues Ala63–Ser124 enclose the SH3 domain. The SH2 domain occupies Trp130 to Cys222. Residues Leu248–Tyr504 enclose the Protein kinase domain. ATP is bound by residues Leu254 to Val262 and Lys276. The active-site Proton acceptor is Asp370.

The protein belongs to the protein kinase superfamily. Tyr protein kinase family. SRC subfamily. Ubiquitous in early embryos, in stages 13-16 expression is seen in visceral mesoderm, hindgut, brain, anal pads and ventral ganglions. In larvae, expression is in CNS, wing disk, leg disk and photoreceptor precursors in the eye-antenna disks posterior to the morphogenetic furrow.

The enzyme catalyses L-tyrosyl-[protein] + ATP = O-phospho-L-tyrosyl-[protein] + ADP + H(+). In terms of biological role, required directly or indirectly for the phosphorylation of drpr which is necessary for the interaction of drpr with shark and subsequent glial phagocytic activity. Together with drpr and shark, promotes the migration of macrophages to sites of wounding as part of a signaling cascade where Src42A detects production of hydrogen peroxide at wound sites which triggers phosphorylation of drpr and subsequent recruitment and activation of shark. Essential for correct eye morphogenesis (ommatidial R7 neuron formation) which requires the Ras1/MAPK signal transduction pathway. May be involved in the regulation of cytoskeleton organization and cell-cell contacts in developing ommatidia. Involved in phosphorylation of Dscam1, a cell surface receptor involved in targeting of growing axons during eye morphogenesis, and its interaction partner the SH2/SH3 adapter protein dock/dreadlocks. During embryogenesis, involved in regulation of dorsal closure where it may have a role in activating the JNK pathway in leading edge cells during this process. The sequence is that of Tyrosine-protein kinase Src42A from Drosophila melanogaster (Fruit fly).